The primary structure comprises 162 residues: UPF0303 protein RL3365 (162 aa).

The protein belongs to the UPF0303 family.

This is UPF0303 protein RL3365 from Rhizobium johnstonii (strain DSM 114642 / LMG 32736 / 3841) (Rhizobium leguminosarum bv. viciae).